The following is a 231-amino-acid chain: 6-phosphogluconolactonase (231 aa).

The protein belongs to the glucosamine/galactosamine-6-phosphate isomerase family. 6-phosphogluconolactonase subfamily.

It catalyses the reaction 6-phospho-D-glucono-1,5-lactone + H2O = 6-phospho-D-gluconate + H(+). It functions in the pathway carbohydrate degradation; pentose phosphate pathway; D-ribulose 5-phosphate from D-glucose 6-phosphate (oxidative stage): step 2/3. In terms of biological role, hydrolysis of 6-phosphogluconolactone to 6-phosphogluconate. This Neisseria meningitidis serogroup A / serotype 4A (strain DSM 15465 / Z2491) protein is 6-phosphogluconolactonase (pgl).